The sequence spans 70 residues: Putative membrane protein insertion efficiency factor (70 aa).

Belongs to the UPF0161 family.

Its subcellular location is the cell inner membrane. In terms of biological role, could be involved in insertion of integral membrane proteins into the membrane. The chain is Putative membrane protein insertion efficiency factor from Desulforapulum autotrophicum (strain ATCC 43914 / DSM 3382 / VKM B-1955 / HRM2) (Desulfobacterium autotrophicum).